Here is a 113-residue protein sequence, read N- to C-terminus: U11-theraphotoxin-Hhn1a (113 aa).

A signal peptide spans methionine 1–alanine 21. Positions aspartate 22–arginine 74 are excised as a propeptide. Cystine bridges form between cysteine 75–cysteine 90, cysteine 82–cysteine 95, and cysteine 89–cysteine 110.

The protein belongs to the neurotoxin 14 (magi-1) family. 01 (HNTX-16) subfamily. As to expression, expressed by the venom gland.

The protein localises to the secreted. Functionally, probable ion channel inhibitor. This is U11-theraphotoxin-Hhn1a from Cyriopagopus hainanus (Chinese bird spider).